Consider the following 425-residue polypeptide: Nuclear pore complex-interacting protein family member B6 (425 aa).

The disordered stretch occupies residues 332–414 (SPLPPSVDDN…RRLSKLRTRH (83 aa)). The segment covering 353-395 (EVEKPPKPKRWRVDEVEQSPKPKRRRVDEVEQSPKPKRQREAE) has biased composition (basic and acidic residues). Over residues 401-414 (KPKRRRLSKLRTRH) the composition is skewed to basic residues.

It belongs to the NPIP family.

This is Nuclear pore complex-interacting protein family member B6 (NPIPB6) from Homo sapiens (Human).